We begin with the raw amino-acid sequence, 41 residues long: Histone H2B.3, sperm (41 aa).

The tract at residues 1–41 is disordered; that stretch reads MPRSPSKSSPKKGSPRKASPKRGGKGAKRAGKGGRRRTVVK. 4 short sequence motifs (SPKK motif) span residues 4–7, 9–12, 14–17, and 19–22; these read SPSK, SPKK, SPRK, and SPKR. Basic residues predominate over residues 9–41; that stretch reads SPKKGSPRKASPKRGGKGAKRAGKGGRRRTVVK. Ser-14 and Ser-19 each carry phosphoserine.

This sequence belongs to the histone H2B family. In terms of assembly, the nucleosome is a histone octamer containing two molecules each of H2A, H2B, H3 and H4 assembled in one H3-H4 heterotetramer and two H2A-H2B heterodimers. The octamer wraps approximately 147 bp of DNA. In terms of processing, monoubiquitination gives a specific tag for epigenetic transcriptional activation and is also prerequisite for histone H3 'Lys-4' and 'Lys-79' methylation. Post-translationally, phosphorylated on SPKK motifs 3 and 4; which may regulate DNA binding. Dephosphorylated during maturation of spermatids to mature sperm and rephosphorylated at fertilization.

Its subcellular location is the nucleus. It localises to the chromosome. Its function is as follows. Core component of nucleosome. Nucleosomes wrap and compact DNA into chromatin, limiting DNA accessibility to the cellular machineries which require DNA as a template. Histones thereby play a central role in transcription regulation, DNA repair, DNA replication and chromosomal stability. DNA accessibility is regulated via a complex set of post-translational modifications of histones, also called histone code, and nucleosome remodeling. The chain is Histone H2B.3, sperm from Echinus esculentus (Sea urchin).